The sequence spans 312 residues: Olfactory receptor 1500 (312 aa).

The Extracellular segment spans residues 1 to 25; that stretch reads MTGNNQTLILEFLLLGLPIPSEYHL. An N-linked (GlcNAc...) asparagine glycan is attached at Asn-5. A helical transmembrane segment spans residues 26–49; that stretch reads LFYALFLAMYLTIILGNLLIIVLV. Topologically, residues 50 to 57 are cytoplasmic; it reads RLDSHLHM. A helical membrane pass occupies residues 58-79; sequence PMYLFLSNLSFSDLCFSSVTMP. The Extracellular portion of the chain corresponds to 80–100; it reads KLLQNMQSQVPSISYTGCLTQ. Cys-97 and Cys-189 are joined by a disulfide. A helical membrane pass occupies residues 101–120; sequence LYFFMVFGDMESFLLVVMAY. Residues 121–139 are Cytoplasmic-facing; that stretch reads DRYVAICFPLRYTTIMSTK. The chain crosses the membrane as a helical span at residues 140 to 158; sequence FCASLVLLLWMLTMTHALL. Over 159–196 the chain is Extracellular; sequence HTLLIARLSFCEKNVILHFFCDISALLKLSCSDIYVNE. A helical transmembrane segment spans residues 197-219; sequence LMIYILGGLIIIIPFLLIVMSYV. Residues 220-236 are Cytoplasmic-facing; it reads RIFFSILKFPSIQDIYK. Residues 237 to 260 traverse the membrane as a helical segment; it reads VFSTCGSHLSVVTLFYGTIFGIYL. The Extracellular segment spans residues 261 to 272; the sequence is CPSGNNSTVKEI. A helical membrane pass occupies residues 273–292; the sequence is AMAMMYTVVTPMLNPFIYSL. The Cytoplasmic portion of the chain corresponds to 293 to 312; sequence RNRDMKRALIRVICTKKISL.

It belongs to the G-protein coupled receptor 1 family. In terms of tissue distribution, olfactory epithelium.

It is found in the cell membrane. In terms of biological role, odorant receptor. This is Olfactory receptor 1500 (Olr1500) from Rattus norvegicus (Rat).